The chain runs to 505 residues: UDP-N-acetylmuramoyl-L-alanyl-D-glutamate--2,6-diaminopimelate ligase (505 aa).

Ser-42 provides a ligand contact to UDP-N-acetyl-alpha-D-muramoyl-L-alanyl-D-glutamate. 126 to 132 provides a ligand contact to ATP; sequence GTNGKTT. Residues 168–169, Ser-195, Gln-201, and Arg-203 contribute to the UDP-N-acetyl-alpha-D-muramoyl-L-alanyl-D-glutamate site; that span reads TT. Lys-235 is subject to N6-carboxylysine. Residues Arg-399, 423-426, Gly-474, and Glu-478 each bind meso-2,6-diaminopimelate; that span reads DNPR. Positions 423–426 match the Meso-diaminopimelate recognition motif motif; sequence DNPR.

Belongs to the MurCDEF family. MurE subfamily. Requires Mg(2+) as cofactor. Carboxylation is probably crucial for Mg(2+) binding and, consequently, for the gamma-phosphate positioning of ATP.

The protein localises to the cytoplasm. It carries out the reaction UDP-N-acetyl-alpha-D-muramoyl-L-alanyl-D-glutamate + meso-2,6-diaminopimelate + ATP = UDP-N-acetyl-alpha-D-muramoyl-L-alanyl-gamma-D-glutamyl-meso-2,6-diaminopimelate + ADP + phosphate + H(+). It participates in cell wall biogenesis; peptidoglycan biosynthesis. Functionally, catalyzes the addition of meso-diaminopimelic acid to the nucleotide precursor UDP-N-acetylmuramoyl-L-alanyl-D-glutamate (UMAG) in the biosynthesis of bacterial cell-wall peptidoglycan. This chain is UDP-N-acetylmuramoyl-L-alanyl-D-glutamate--2,6-diaminopimelate ligase, found in Synechocystis sp. (strain ATCC 27184 / PCC 6803 / Kazusa).